We begin with the raw amino-acid sequence, 249 residues long: Ribosomal RNA small subunit methyltransferase J (249 aa).

S-adenosyl-L-methionine contacts are provided by residues 101–102, 117–118, and D171; these read RD and ER.

Belongs to the methyltransferase superfamily. RsmJ family.

It is found in the cytoplasm. The catalysed reaction is guanosine(1516) in 16S rRNA + S-adenosyl-L-methionine = N(2)-methylguanosine(1516) in 16S rRNA + S-adenosyl-L-homocysteine + H(+). Specifically methylates the guanosine in position 1516 of 16S rRNA. The protein is Ribosomal RNA small subunit methyltransferase J of Tolumonas auensis (strain DSM 9187 / NBRC 110442 / TA 4).